The chain runs to 337 residues: Meiotic driver wtf4 (337 aa).

Positions Met-1 to Pro-29 are enriched in basic and acidic residues. The disordered stretch occupies residues Met-1–Thr-40. 6 consecutive transmembrane segments (helical) span residues Leu-89–Pro-109, Ala-119–Phe-139, Cys-149–Tyr-169, Val-176–Phe-196, Cys-210–Leu-230, and Phe-234–Leu-254.

It belongs to the WTF family. Homomer. Forms protein aggregates. The two isoforms can interact with each other and with themselves. High sequence similarity is required for their interaction.

The protein resides in the spore membrane. It localises to the vacuole membrane. The protein localises to the ascus epiplasm. It is found in the cytoplasm. Its subcellular location is the endoplasmic reticulum membrane. Its function is as follows. Promotes unequal transmission of alleles from the parental zygote to progeny spores by acting as poison/antidote system where the poison and antidote proteins are produced from the same locus; the poison component is trans-acting and targets all spores within an ascus whereas the antidote component is spore-specific, leading to poisoning of all progeny that do not inherit the allele. In terms of biological role, localizes isoform 2 to the vacuole thereby facilitating its degradation. Forms toxic aggregates that disrupt spore maturation. The chain is Meiotic driver wtf4 from Schizosaccharomyces kambucha (Fission yeast).